The primary structure comprises 688 residues: Potassium-transporting ATPase ATP-binding subunit (688 aa).

The next 4 helical transmembrane spans lie at Val35–Gly55, Ala62–Ala82, Ile219–Leu239, and Val260–Ile280. Asp313 acts as the 4-aspartylphosphate intermediate in catalysis. ATP is bound by residues Asp350, Glu354, Phe383–Ser390, and Lys401. The Mg(2+) site is built by Asp524 and Asp528. The next 3 helical transmembrane spans lie at Phe594–Met614, Ala622–Leu642, and Val668–Ala688.

Belongs to the cation transport ATPase (P-type) (TC 3.A.3) family. Type IA subfamily. In terms of assembly, the system is composed of three essential subunits: KdpA, KdpB and KdpC.

It is found in the cell inner membrane. It catalyses the reaction K(+)(out) + ATP + H2O = K(+)(in) + ADP + phosphate + H(+). In terms of biological role, part of the high-affinity ATP-driven potassium transport (or Kdp) system, which catalyzes the hydrolysis of ATP coupled with the electrogenic transport of potassium into the cytoplasm. This subunit is responsible for energy coupling to the transport system and for the release of the potassium ions to the cytoplasm. The chain is Potassium-transporting ATPase ATP-binding subunit from Dechloromonas aromatica (strain RCB).